We begin with the raw amino-acid sequence, 452 residues long: Isocitrate dehydrogenase [NADP], mitochondrial (452 aa).

Residues 1-39 constitute a mitochondrion transit peptide; it reads MAGYLRVVRSLCRASGSGSAWAPAALTAPNLQEQPRRHY. An N6-acetyllysine mark is found at Lys45, Lys48, Lys67, and Lys69. An N6-acetyllysine; alternate mark is found at Lys80 and Lys106. 2 positions are modified to N6-succinyllysine; alternate: Lys80 and Lys106. Residues 115–117 and Arg122 each bind NADP(+); that span reads TIT. Position 117 (Thr117) interacts with D-threo-isocitrate. Residues 134–140 and Arg149 each bind D-threo-isocitrate; that span reads SPNGTIR. The residue at position 155 (Lys155) is an N6-acetyllysine. Lys166 is modified (N6-acetyllysine; alternate). Lys166 bears the N6-succinyllysine; alternate mark. Arg172 is a D-threo-isocitrate binding site. An N6-acetyllysine; alternate mark is found at Lys180 and Lys193. 2 positions are modified to N6-succinyllysine; alternate: Lys180 and Lys193. Position 199 is an N6-acetyllysine (Lys199). The residue at position 256 (Lys256) is an N6-acetyllysine; alternate. An N6-succinyllysine; alternate modification is found at Lys256. N6-acetyllysine is present on residues Lys263, Lys272, Lys275, and Lys280. At Lys282 the chain carries N6-acetyllysine; alternate. Lys282 is modified (N6-succinyllysine; alternate). Asp291 is a Mn(2+) binding site. Lys299 contributes to the NADP(+) binding site. Asp314 is a binding site for Mn(2+). NADP(+) contacts are provided by residues 349-354 and Asn367; that span reads GTVTRH. N6-acetyllysine; alternate is present on Lys384. Residue Lys384 is modified to N6-succinyllysine; alternate. N6-acetyllysine occurs at positions 400, 413, and 442.

Belongs to the isocitrate and isopropylmalate dehydrogenases family. In terms of assembly, homodimer. It depends on Mg(2+) as a cofactor. Requires Mn(2+) as cofactor. Post-translationally, acetylation at Lys-413 dramatically reduces catalytic activity. Deacetylated by SIRT3.

It is found in the mitochondrion. The enzyme catalyses D-threo-isocitrate + NADP(+) = 2-oxoglutarate + CO2 + NADPH. Functionally, plays a role in intermediary metabolism and energy production. It may tightly associate or interact with the pyruvate dehydrogenase complex. The chain is Isocitrate dehydrogenase [NADP], mitochondrial (IDH2) from Bos taurus (Bovine).